Here is a 44-residue protein sequence, read N- to C-terminus: Protein PsbN (44 aa).

The helical transmembrane segment at 6–26 threads the bilayer; sequence FFFSLFVWCLLLSITAYSLYV.

Belongs to the PsbN family.

It localises to the plastid. The protein resides in the chloroplast thylakoid membrane. May play a role in photosystem I and II biogenesis. This is Protein PsbN from Tupiella akineta (Green alga).